The following is a 45-amino-acid chain: Proteinase inhibitor IIA (45 aa).

3 cysteine pairs are disulfide-bonded: C10–C24, C14–C35, and C20–C43.

It belongs to the protease inhibitor I20 (potato type II proteinase inhibitor) family.

The protein localises to the secreted. Inhibits trypsin strongly and chymotrypsin temporarily. This chain is Proteinase inhibitor IIA, found in Solanum tuberosum (Potato).